The following is a 403-amino-acid chain: Aurora kinase A (403 aa).

The interval 1–125 is disordered; that stretch reads MDRSKENCIS…SKQKNEESKK (125 aa). 2 stretches are compositionally biased toward polar residues: residues 27–83 and 91–101; these read VTQQ…QATS and PLNNTQKSKQP. Phosphoserine is present on residues S41 and S51. The span at 114-125 shows a compositional bias: basic and acidic residues; the sequence is LASKQKNEESKK. In terms of domain architecture, Protein kinase spans 133 to 383; that stretch reads FEIGRPLGKG…LREVLEHPWI (251 aa). ATP-binding positions include K143, K162, and 211 to 213; that span reads EYA. The active-site Proton acceptor is D256. A Glycyl lysine isopeptide (Lys-Gly) (interchain with G-Cter in SUMO2) cross-link involves residue K258. Residues 260–261 and D274 contribute to the ATP site; that span reads EN. An activation segment region spans residues 280–293; it reads HAPSSRRTTLCGTL. Phosphothreonine is present on residues T287 and T288. S342 is subject to Phosphoserine; by PKA and PAK.

This sequence belongs to the protein kinase superfamily. Ser/Thr protein kinase family. Aurora subfamily. As to quaternary structure, part of a complex composed of NEDD9, AURKA and CTTN; within the complex NEDD9 acts as a scaffold protein and is required for complex formation. Identified in a complex with AUNIP and NIN. Interacts with FBXL7. Interacts with CPEB1, JTB, TACC1, TPX2, PPP2CA, as well as with the protein phosphatase type 1 (PP1) isoforms PPP1CA, PPP1CB and PPP1CC. Also interacts with its substrates ARHGEF2, BORA, KIF2A, PARD3, and p53/TP53. Interaction with BORA promotes phosphorylation of PLK1. Interacts with CIMAP3. Interacts with GADD45A, competing with its oligomerization. Interacts (via C-terminus) with AUNIP (via C-terminus). Interacts with FRY; this interaction facilitates AURKA-mediated PLK1 phosphorylation. Interacts with SIRT2. Interacts with MYCN; interaction is phospho-independent and triggers AURKA activation; AURKA competes with FBXW7 for binding to unphosphorylated MYCN but not for binding to phosphorylated MYCN. Interacts with HNRNPU. Interacts with AAAS. Interacts with KLHL18 and CUL3. Interacts with FOXP1. Interacts with HDAC6; AURKA-mediated phosphorylation of HDAC6 promotes deacetylation of alpha-tubulin. In terms of processing, activated by phosphorylation at Thr-288; this brings about a change in the conformation of the activation segment. Phosphorylation at Thr-288 varies during the cell cycle and is highest during M phase. Autophosphorylated at Thr-288 upon TPX2 binding. Thr-288 can be phosphorylated by several kinases, including PAK and PKA. Protein phosphatase type 1 (PP1) binds AURKA and inhibits its activity by dephosphorylating Thr-288 during mitosis. Phosphorylation at Ser-342 decreases the kinase activity. PPP2CA controls degradation by dephosphorylating Ser-51 at the end of mitosis. Ubiquitinated by the E3 ubiquitin-protein ligase complex SCF(FBXL7) during mitosis, leading to its degradation by the proteasome. Ubiquitinated by CHFR, leading to its degradation by the proteasome. Ubiquitinated by the anaphase-promoting complex (APC), leading to its degradation by the proteasome. Ubiquitinated by the CUL3-KLHL18 ligase leading to its activation at the centrosome which is required for initiating mitotic entry. Ubiquitination mediated by CUL3-KLHL18 ligase does not lead to its degradation by the proteasome. As to expression, highly expressed in testis and weakly in skeletal muscle, thymus and spleen. Also highly expressed in colon, ovarian, prostate, neuroblastoma, breast and cervical cancer cell lines.

Its subcellular location is the cytoplasm. It is found in the cytoskeleton. The protein localises to the microtubule organizing center. The protein resides in the centrosome. It localises to the spindle pole. Its subcellular location is the centriole. It is found in the cell projection. The protein localises to the neuron projection. The protein resides in the cilium. It localises to the cilium basal body. Its subcellular location is the basolateral cell membrane. It catalyses the reaction L-seryl-[protein] + ATP = O-phospho-L-seryl-[protein] + ADP + H(+). The catalysed reaction is L-threonyl-[protein] + ATP = O-phospho-L-threonyl-[protein] + ADP + H(+). Activation of CDK1, appears to be an upstream event of AURKA activation. Phosphatase inhibitor-2 (PPP1R2) and TPX2 act also as activators. Inactivated by the G2 checkpoint. Inhibited by GADD45A and p53/TP53, and through dephosphorylation by protein phosphatase type 1 (PP1). MLN8054 is also a potent and selective inhibitor. Activated during the early phase of cilia disassembly in the presence of CIMAP3. Inhibited by the small molecule inhibitor VX-680. Functionally, mitotic serine/threonine kinase that contributes to the regulation of cell cycle progression. Associates with the centrosome and the spindle microtubules during mitosis and plays a critical role in various mitotic events including the establishment of mitotic spindle, centrosome duplication, centrosome separation as well as maturation, chromosomal alignment, spindle assembly checkpoint, and cytokinesis. Required for normal spindle positioning during mitosis and for the localization of NUMA1 and DCTN1 to the cell cortex during metaphase. Required for initial activation of CDK1 at centrosomes. Phosphorylates numerous target proteins, including ARHGEF2, BORA, BRCA1, CDC25B, DLGP5, HDAC6, KIF2A, LATS2, NDEL1, PARD3, PPP1R2, PLK1, RASSF1, TACC3, p53/TP53 and TPX2. Phosphorylates MCRS1 which is required for MCRS1-mediated kinetochore fiber assembly and mitotic progression. Regulates KIF2A tubulin depolymerase activity. Important for microtubule formation and/or stabilization. Required for normal axon formation. Plays a role in microtubule remodeling during neurite extension. Also acts as a key regulatory component of the p53/TP53 pathway, and particularly the checkpoint-response pathways critical for oncogenic transformation of cells, by phosphorylating and destabilizing p53/TP53. Phosphorylates its own inhibitors, the protein phosphatase type 1 (PP1) isoforms, to inhibit their activity. Inhibits cilia outgrowth. Required for cilia disassembly via phosphorylation of HDAC6 and subsequent deacetylation of alpha-tubulin. Regulates protein levels of the anti-apoptosis protein BIRC5 by suppressing the expression of the SCF(FBXL7) E3 ubiquitin-protein ligase substrate adapter FBXL7 through the phosphorylation of the transcription factor FOXP1. This Homo sapiens (Human) protein is Aurora kinase A.